We begin with the raw amino-acid sequence, 208 residues long: Small ribosomal subunit protein uS4 (208 aa).

An S4 RNA-binding domain is found at 98–158 (RRLDNIVYRL…EKSRKVASIN (61 aa)).

The protein belongs to the universal ribosomal protein uS4 family. As to quaternary structure, part of the 30S ribosomal subunit. Contacts protein S5. The interaction surface between S4 and S5 is involved in control of translational fidelity.

One of the primary rRNA binding proteins, it binds directly to 16S rRNA where it nucleates assembly of the body of the 30S subunit. In terms of biological role, with S5 and S12 plays an important role in translational accuracy. This Geotalea daltonii (strain DSM 22248 / JCM 15807 / FRC-32) (Geobacter daltonii) protein is Small ribosomal subunit protein uS4.